The primary structure comprises 1503 residues: Translocase of chloroplast 159, chloroplastic (1503 aa).

Residues 1–24 (MDSKSVTPEPTNPFYASSGQSGKT) are compositionally biased toward polar residues. Residues 1-210 (MDSKSVTPEP…GGKVDVDDKS (210 aa)) are disordered. A helical membrane pass occupies residues 21–37 (SGKTYASVVAAAAAAAA). A Phosphoserine modification is found at serine 71. Basic and acidic residues-rich tracts occupy residues 85–98 (KVSD…KEDS) and 176–210 (SESK…DDKS). Phosphoserine is present on residues serine 210, serine 281, and serine 288. 2 disordered regions span residues 298–338 (KFTS…DVEK) and 429–464 (VHNK…SEGD). Over residues 447 to 456 (ESDKATEEGG) the composition is skewed to basic and acidic residues. A phosphoserine mark is found at serine 448, serine 461, serine 589, serine 609, serine 630, serine 632, and serine 665. Positions 610-633 (FGGKEVDQEPSGEGVTRVDGSESE) are disordered. Residues 781–804 (EEEKQKLEKLQSLRVKFLRLLQRL) adopt a coiled-coil conformation. Positions 853-1087 (IFSLNILVLG…RPQEPLDHRK (235 aa)) constitute an AIG1-type G domain. The G1 stretch occupies residues 862 to 869 (GKAGVGKS). GTP-binding positions include 865–870 (GVGKSA) and 884–889 (DAFGLS). Residue serine 869 coordinates Mg(2+). Residues 884–887 (DAFG) are homodimerization. Positions 889–893 (STTSV) are G2. A G3 region spans residues 909-912 (DTPG). The interval 947-952 (RLDTQT) is homodimerization. Positions 981 to 984 (THAA) are G4. GTP is bound by residues histidine 982 and 1035–1036 (EN). The segment at 1035–1037 (ENH) is G5. Positions 1175-1203 (DYRVKLLQKKQWREELKRMKEMKKNGKKL) form a coiled coil. The tract at residues 1203–1222 (LGESEFGYPGEEDDPENGAP) is disordered.

Belongs to the TRAFAC class TrmE-Era-EngA-EngB-Septin-like GTPase superfamily. AIG1/Toc34/Toc159-like paraseptin GTPase family. TOC159 subfamily. In terms of assembly, homodimer and heterodimer with TOC33. Part of the TOC core complex that includes 1 protein for the specific recognition of transit peptides surrounded by a ring composed of four proteins forming translocation channels, and four to five GTP-binding proteins providing energy. This core complex can interact with components of the TIC complex to form a larger import complex. Chloroplastic protein precursor such as prSS (precursor of the RuBisCO small subunit) interacts with these complexes. The TOC complex contains a specific subset of polar lipids such as digalactosyldiacylglyceride (DGDG), phosphatidylcholine (PC) and phosphatidylglycerol (PG). Interacts with SP1. The cofactor is Mg(2+). Post-translationally, phosphorylated by KOC1.

It is found in the plastid. The protein localises to the chloroplast outer membrane. The protein resides in the cytoplasm. GTPase involved in protein precursor import into chloroplasts. Seems to recognize chloroplast-destined precursor proteins and regulate their presentation to the translocation channel through GTP hydrolysis. Required for chloroplast biogenesis. Probably specialized in the import of nuclear encoded photosynthetic preproteins from the cytoplasm to the chloroplast. The polypeptide is Translocase of chloroplast 159, chloroplastic (Arabidopsis thaliana (Mouse-ear cress)).